The following is a 1024-amino-acid chain: Beta-galactosidase (1024 aa).

Asn-103 and Asp-202 together coordinate substrate. Asp-202 lines the Na(+) pocket. Positions 417, 419, and 462 each coordinate Mg(2+). Substrate-binding positions include Glu-462 and 538–541 (EYAH). Glu-462 functions as the Proton donor in the catalytic mechanism. The active-site Nucleophile is Glu-538. Asn-598 contacts Mg(2+). Residues Phe-602 and Asn-605 each coordinate Na(+). Residues Asn-605 and Trp-1000 each contribute to the substrate site.

Belongs to the glycosyl hydrolase 2 family. Homotetramer. Mg(2+) is required as a cofactor. Na(+) serves as cofactor.

The catalysed reaction is Hydrolysis of terminal non-reducing beta-D-galactose residues in beta-D-galactosides.. The polypeptide is Beta-galactosidase (Escherichia coli O6:K15:H31 (strain 536 / UPEC)).